A 404-amino-acid polypeptide reads, in one-letter code: Glucose-1-phosphate adenylyltransferase (404 aa).

Alpha-D-glucose 1-phosphate is bound by residues Tyr-99, Gly-164, Glu-179–Lys-180, and Ser-197.

This sequence belongs to the bacterial/plant glucose-1-phosphate adenylyltransferase family.

It carries out the reaction alpha-D-glucose 1-phosphate + ATP + H(+) = ADP-alpha-D-glucose + diphosphate. Its pathway is capsule biogenesis; capsule polysaccharide biosynthesis. It participates in glycan biosynthesis; glycogen biosynthesis. Involved in the biosynthesis of ADP-glucose, a building block, required in the biosynthesis of maltose-1-phosphate (M1P) and in the elongation reactions to produce linear alpha-1,4-glucans. Catalyzes the reaction between ATP and alpha-D-glucose 1-phosphate (G1P) to produce pyrophosphate and ADP-Glc. The chain is Glucose-1-phosphate adenylyltransferase from Mycobacterium bovis (strain ATCC BAA-935 / AF2122/97).